Consider the following 418-residue polypeptide: Glutamyl-tRNA reductase (418 aa).

Residues 49 to 52 (TCNR), Ser107, 112 to 114 (EPQ), and Gln118 each bind substrate. Cys50 serves as the catalytic Nucleophile. 187–192 (GAGETI) provides a ligand contact to NADP(+).

It belongs to the glutamyl-tRNA reductase family. In terms of assembly, homodimer.

It catalyses the reaction (S)-4-amino-5-oxopentanoate + tRNA(Glu) + NADP(+) = L-glutamyl-tRNA(Glu) + NADPH + H(+). Its pathway is porphyrin-containing compound metabolism; protoporphyrin-IX biosynthesis; 5-aminolevulinate from L-glutamyl-tRNA(Glu): step 1/2. Functionally, catalyzes the NADPH-dependent reduction of glutamyl-tRNA(Glu) to glutamate 1-semialdehyde (GSA). The sequence is that of Glutamyl-tRNA reductase from Vibrio campbellii (strain ATCC BAA-1116).